The following is a 727-amino-acid chain: Anaphase-promoting complex subunit 5 (727 aa).

The residue at position 180 (S180) is a Phosphoserine. TPR repeat units follow at residues 194-234 (QKQA…FNPD), 235-285 (FAEA…GRSL), 286-322 (RYAALNLAALHCRFGHYQQAELALQEAIRIAQESNDH), 323-359 (VCLQHCLSWLYVLGQKRADSYVLLEHSVKKAVHFGLP), 360-390 (RAFAGKTANKLMDALKDSDLLHWKHSLSELI), 391-438 (DISI…TESF), 439-472 (AVALCHLAELHAEQGCFAAAGEVLKHLKERFPPN), 473-512 (SQHAQLWMLCDQKIQFDRAMNDGKFHLADSLVTGITALNG), 513-552 (IEGVYRKAVVLQAQNQMTEAHKLLQKLLTYCQKLKNTEMV), 553-592 (ISVLLSVAELYWRSSSPTIAMPVLLEALALSKEYRLQYLA), 593-632 (SETVLNLAYAQLILGIPEQALTLLHMAIEPILADGAILDK), 633-668 (GRAMFLVSKCQVASAASYDPVKKAEALEAAIQNLTE), and 669-708 (AKNYFAKVDCRERIRDVSYFQARLYHALGKTQERNHCAMV). A Phosphothreonine modification is found at T217.

This sequence belongs to the APC5 family. In terms of assembly, the mammalian APC/C is composed at least of 14 distinct subunits ANAPC1, ANAPC2, CDC27/APC3, ANAPC4, ANAPC5, CDC16/APC6, ANAPC7, CDC23/APC8, ANAPC10, ANAPC11, CDC26/APC12, ANAPC13, ANAPC15 and ANAPC16 that assemble into a complex of at least 19 chains with a combined molecular mass of around 1.2 MDa; APC/C interacts with FZR1 and FBXO5.

It localises to the nucleus. It is found in the cytoplasm. Its subcellular location is the cytoskeleton. The protein resides in the spindle. It functions in the pathway protein modification; protein ubiquitination. Component of the anaphase promoting complex/cyclosome (APC/C), a cell cycle-regulated E3 ubiquitin ligase that controls progression through mitosis and the G1 phase of the cell cycle. The APC/C complex acts by mediating ubiquitination and subsequent degradation of target proteins: it mainly mediates the formation of 'Lys-11'-linked polyubiquitin chains and, to a lower extent, the formation of 'Lys-48'- and 'Lys-63'-linked polyubiquitin chains. The APC/C complex catalyzes assembly of branched 'Lys-11'-/'Lys-48'-linked branched ubiquitin chains on target proteins. The protein is Anaphase-promoting complex subunit 5 (Anapc5) of Rattus norvegicus (Rat).